The chain runs to 134 residues: MKDWLDEIHWNADGLVPAIAQDHETGRVLMMAWMNREALALTASENRAIYWSRSRGKLWRKGEESGHVQKLHELRLDCDADVVILMVEQVGGIACHTGRESCFYRVFENGAWKTIDPVLKDPDAIYEHAGHHHE.

Asp77 provides a ligand contact to Mg(2+). Position 78 (Cys78) interacts with Zn(2+). Residues Asp79 and Asp81 each coordinate Mg(2+). Zn(2+) contacts are provided by Cys95 and Cys102.

This sequence belongs to the PRA-CH family. As to quaternary structure, homodimer. The cofactor is Mg(2+). Zn(2+) is required as a cofactor.

It is found in the cytoplasm. The enzyme catalyses 1-(5-phospho-beta-D-ribosyl)-5'-AMP + H2O = 1-(5-phospho-beta-D-ribosyl)-5-[(5-phospho-beta-D-ribosylamino)methylideneamino]imidazole-4-carboxamide. It participates in amino-acid biosynthesis; L-histidine biosynthesis; L-histidine from 5-phospho-alpha-D-ribose 1-diphosphate: step 3/9. Functionally, catalyzes the hydrolysis of the adenine ring of phosphoribosyl-AMP. The chain is Phosphoribosyl-AMP cyclohydrolase from Pseudomonas aeruginosa (strain UCBPP-PA14).